The chain runs to 335 residues: GTPase Obg (335 aa).

An Obg domain is found at 4 to 162; the sequence is GNFVDYTKIY…ADIVLELKVL (159 aa). Residues 163-332 form the OBG-type G domain; it reads ADVGLVGFPN…LKDKLWAMLN (170 aa). Residues 169-176, 194-198, 216-219, 283-286, and 313-315 each bind GTP; these read GFPNAGKS, FTTLK, DIPG, SKCD, and SSI. Mg(2+) is bound by residues Ser-176 and Thr-196.

Belongs to the TRAFAC class OBG-HflX-like GTPase superfamily. OBG GTPase family. As to quaternary structure, monomer. The cofactor is Mg(2+).

It localises to the cytoplasm. In terms of biological role, an essential GTPase which binds GTP, GDP and possibly (p)ppGpp with moderate affinity, with high nucleotide exchange rates and a fairly low GTP hydrolysis rate. Plays a role in control of the cell cycle, stress response, ribosome biogenesis and in those bacteria that undergo differentiation, in morphogenesis control. This chain is GTPase Obg, found in Flavobacterium psychrophilum (strain ATCC 49511 / DSM 21280 / CIP 103535 / JIP02/86).